Here is a 156-residue protein sequence, read N- to C-terminus: Lipoprotein signal peptidase (156 aa).

2 consecutive transmembrane segments (helical) span residues 57–77 (LFLI…LFIN) and 83–103 (ILKI…IDRI). Catalysis depends on residues aspartate 110 and aspartate 129. The chain crosses the membrane as a helical span at residues 124-144 (IFNIADVLVSLGTILLIIFII).

Belongs to the peptidase A8 family.

It is found in the cell membrane. It catalyses the reaction Release of signal peptides from bacterial membrane prolipoproteins. Hydrolyzes -Xaa-Yaa-Zaa-|-(S,diacylglyceryl)Cys-, in which Xaa is hydrophobic (preferably Leu), and Yaa (Ala or Ser) and Zaa (Gly or Ala) have small, neutral side chains.. The protein operates within protein modification; lipoprotein biosynthesis (signal peptide cleavage). This protein specifically catalyzes the removal of signal peptides from prolipoproteins. The sequence is that of Lipoprotein signal peptidase from Clostridium tetani (strain Massachusetts / E88).